The primary structure comprises 478 residues: Dihydrolipoyl dehydrogenase (478 aa).

FAD contacts are provided by residues 34–49 (EKYI…GGTC), Lys-58, and Gly-122. Cys-49 and Cys-54 are joined by a disulfide. NAD(+) is bound by residues 188–192 (GAGVI), Glu-211, Val-245, and 276–279 (AVGR). Positions 319 and 327 each coordinate FAD. His-451 acts as the Proton acceptor in catalysis.

The protein belongs to the class-I pyridine nucleotide-disulfide oxidoreductase family. Homodimer. FAD is required as a cofactor.

The protein resides in the cytoplasm. The catalysed reaction is N(6)-[(R)-dihydrolipoyl]-L-lysyl-[protein] + NAD(+) = N(6)-[(R)-lipoyl]-L-lysyl-[protein] + NADH + H(+). The branched-chain alpha-keto dehydrogenase complex catalyzes the overall conversion of alpha-keto acids to acyl-CoA and CO(2). It contains multiple copies of 3 enzymatic components: branched-chain alpha-keto acid decarboxylase (E1), lipoamide acyltransferase (E2) and lipoamide dehydrogenase (E3). Functionally, also acts in the glycine cleavage system. In Pseudomonas aeruginosa (strain ATCC 15692 / DSM 22644 / CIP 104116 / JCM 14847 / LMG 12228 / 1C / PRS 101 / PAO1), this protein is Dihydrolipoyl dehydrogenase (lpdG).